We begin with the raw amino-acid sequence, 127 residues long: Large ribosomal subunit protein eL8 (127 aa).

It belongs to the eukaryotic ribosomal protein eL8 family. Part of the 50S ribosomal subunit. Component of box C/D small ribonucleoprotein (sRNP) particles that contain rpl7ae, FlpA and nop5, plus a guide RNA. These sRNP particles form homodimers, giving rise to an asymmetric holoenzyme. Probably part of the RNase P complex.

It localises to the cytoplasm. Its function is as follows. Multifunctional RNA-binding protein that recognizes the K-turn motif in ribosomal RNA, the RNA component of RNase P, box H/ACA, box C/D and box C'/D' sRNAs. In Saccharolobus solfataricus (strain ATCC 35092 / DSM 1617 / JCM 11322 / P2) (Sulfolobus solfataricus), this protein is Large ribosomal subunit protein eL8.